Consider the following 172-residue polypeptide: 3-hydroxydecanoyl-[acyl-carrier-protein] dehydratase (172 aa).

Residue histidine 71 is part of the active site.

Belongs to the thioester dehydratase family. FabA subfamily. As to quaternary structure, homodimer.

It is found in the cytoplasm. The enzyme catalyses a (3R)-hydroxyacyl-[ACP] = a (2E)-enoyl-[ACP] + H2O. It carries out the reaction (3R)-hydroxydecanoyl-[ACP] = (2E)-decenoyl-[ACP] + H2O. It catalyses the reaction (2E)-decenoyl-[ACP] = (3Z)-decenoyl-[ACP]. It participates in lipid metabolism; fatty acid biosynthesis. Necessary for the introduction of cis unsaturation into fatty acids. Catalyzes the dehydration of (3R)-3-hydroxydecanoyl-ACP to E-(2)-decenoyl-ACP and then its isomerization to Z-(3)-decenoyl-ACP. Can catalyze the dehydratase reaction for beta-hydroxyacyl-ACPs with saturated chain lengths up to 16:0, being most active on intermediate chain length. In Pectobacterium atrosepticum (strain SCRI 1043 / ATCC BAA-672) (Erwinia carotovora subsp. atroseptica), this protein is 3-hydroxydecanoyl-[acyl-carrier-protein] dehydratase.